The chain runs to 88 residues: RNA-binding protein Hfq (88 aa).

Residues 9–68 (DPFLNALRRERIPVSIYLVNGIKLQGQIESFDQFVILLKNTVNQMVYKHAISTVVPARAV) form the Sm domain. A disordered region spans residues 66-88 (RAVSHHSASDRPQGERPQEKTEE). A compositionally biased stretch (basic and acidic residues) spans 72–88 (SASDRPQGERPQEKTEE).

This sequence belongs to the Hfq family. Homohexamer.

Functionally, RNA chaperone that binds small regulatory RNA (sRNAs) and mRNAs to facilitate mRNA translational regulation in response to envelope stress, environmental stress and changes in metabolite concentrations. Also binds with high specificity to tRNAs. The sequence is that of RNA-binding protein Hfq from Aliivibrio fischeri (strain ATCC 700601 / ES114) (Vibrio fischeri).